Reading from the N-terminus, the 415-residue chain is Gamma-glutamyl phosphate reductase (415 aa).

The protein belongs to the gamma-glutamyl phosphate reductase family.

The protein localises to the cytoplasm. It carries out the reaction L-glutamate 5-semialdehyde + phosphate + NADP(+) = L-glutamyl 5-phosphate + NADPH + H(+). The protein operates within amino-acid biosynthesis; L-proline biosynthesis; L-glutamate 5-semialdehyde from L-glutamate: step 2/2. Catalyzes the NADPH-dependent reduction of L-glutamate 5-phosphate into L-glutamate 5-semialdehyde and phosphate. The product spontaneously undergoes cyclization to form 1-pyrroline-5-carboxylate. The chain is Gamma-glutamyl phosphate reductase from Listeria innocua serovar 6a (strain ATCC BAA-680 / CLIP 11262).